The primary structure comprises 303 residues: Phosphatidylglycerol--prolipoprotein diacylglyceryl transferase (303 aa).

The next 4 helical transmembrane spans lie at 18–38 (LGPFSLRWYGLLIAISVLVGL), 58–78 (LLPILVLASVIGARIYYVAFE), 106–126 (IWGGGIAIHGALIMGTLSIIF), and 133–153 (EHFWDVIDVLVPSVALGQAIG). Arg154 provides a ligand contact to a 1,2-diacyl-sn-glycero-3-phospho-(1'-sn-glycerol). 3 helical membrane passes run 193–213 (PTFLYESVWNIFVFGILIFLF), 223–243 (LPPGSLSCLYLITYSLGRFWI), and 266–286 (IAQLISLFLISAGLLGIWRIY).

The protein belongs to the Lgt family.

It localises to the cell inner membrane. The catalysed reaction is L-cysteinyl-[prolipoprotein] + a 1,2-diacyl-sn-glycero-3-phospho-(1'-sn-glycerol) = an S-1,2-diacyl-sn-glyceryl-L-cysteinyl-[prolipoprotein] + sn-glycerol 1-phosphate + H(+). Its pathway is protein modification; lipoprotein biosynthesis (diacylglyceryl transfer). Functionally, catalyzes the transfer of the diacylglyceryl group from phosphatidylglycerol to the sulfhydryl group of the N-terminal cysteine of a prolipoprotein, the first step in the formation of mature lipoproteins. This Prochlorococcus marinus (strain NATL2A) protein is Phosphatidylglycerol--prolipoprotein diacylglyceryl transferase.